Here is a 506-residue protein sequence, read N- to C-terminus: Probable E3 ubiquitin-protein ligase ARI14 (506 aa).

Positions 79 to 308 are TRIAD supradomain; it reads PDSSSEISLE…VDSGFCIKTE (230 aa). An RING-type 1 zinc finger spans residues 83–140; the sequence is SEISLETDVYEFDGDNDLISMPFCSHKFDSKYWREYLEKNFYYVEKIQTTISCPDQDC. Zn(2+) contacts are provided by cysteine 106, histidine 108, cysteine 135, cysteine 140, cysteine 180, cysteine 185, cysteine 207, cysteine 209, cysteine 214, cysteine 217, histidine 222, cysteine 227, cysteine 258, cysteine 261, cysteine 277, cysteine 279, cysteine 284, cysteine 287, histidine 294, and cysteine 304. The segment at 158 to 227 adopts an IBR-type zinc-finger fold; sequence EMYERYIWRS…RLESHRPVSC (70 aa). The RING-type 2; atypical zinc-finger motif lies at 258–287; sequence CPHCLCSLESDTKMPQFLTCVCRLRFCSRC. The RanBP2-type zinc finger occupies 462-492; that stretch reads GTGPFWYCDRCTYANTWEDNECEMCYDDSAS.

Belongs to the RBR family. Ariadne subfamily. Zn(2+) is required as a cofactor. In terms of tissue distribution, mostly expressed in closed flowers and, to a lower extent, in pollen.

It carries out the reaction [E2 ubiquitin-conjugating enzyme]-S-ubiquitinyl-L-cysteine + [acceptor protein]-L-lysine = [E2 ubiquitin-conjugating enzyme]-L-cysteine + [acceptor protein]-N(6)-ubiquitinyl-L-lysine.. It participates in protein modification; protein ubiquitination. Might act as an E3 ubiquitin-protein ligase, or as part of E3 complex, which accepts ubiquitin from specific E2 ubiquitin-conjugating enzymes and then transfers it to substrates. Negatively regulates male gametophyte formation and double fertilization. This Arabidopsis thaliana (Mouse-ear cress) protein is Probable E3 ubiquitin-protein ligase ARI14.